Reading from the N-terminus, the 381-residue chain is Formate dehydrogenase, mitochondrial (381 aa).

The N-terminal 25 residues, 1–25 (MAMSRVASTAARAITSPSSLVFTRE), are a transit peptide targeting the mitochondrion. Substrate contacts are provided by I125 and N149. Residues T150, 204–205 (RI), D224, 259–263 (PLTEK), N285, D311, and 335–338 (HISG) contribute to the NAD(+) site.

This sequence belongs to the D-isomer specific 2-hydroxyacid dehydrogenase family. FDH subfamily. Homodimer. As to expression, found at high levels in developing tubers, at intermediate level in stems, veins, stolons, and stamens, and at low level in leaves and roots.

The protein resides in the mitochondrion. The catalysed reaction is formate + NAD(+) = CO2 + NADH. Functionally, catalyzes the NAD(+)-dependent oxidation of formate to carbon dioxide. Involved in the cell stress response. Involved in formate-dependent oxygen uptake coupled to ATP synthesis. The sequence is that of Formate dehydrogenase, mitochondrial from Solanum tuberosum (Potato).